The chain runs to 491 residues: Protein nucleotidyltransferase YdiU (491 aa).

Positions 88, 90, 91, 111, 123, 124, 174, and 181 each coordinate ATP. The Proton acceptor role is filled by aspartate 250. 2 residues coordinate Mg(2+): asparagine 251 and aspartate 260. Aspartate 260 is a binding site for ATP.

Belongs to the SELO family. The cofactor is Mg(2+). Mn(2+) serves as cofactor.

The enzyme catalyses L-seryl-[protein] + ATP = 3-O-(5'-adenylyl)-L-seryl-[protein] + diphosphate. It carries out the reaction L-threonyl-[protein] + ATP = 3-O-(5'-adenylyl)-L-threonyl-[protein] + diphosphate. The catalysed reaction is L-tyrosyl-[protein] + ATP = O-(5'-adenylyl)-L-tyrosyl-[protein] + diphosphate. It catalyses the reaction L-histidyl-[protein] + UTP = N(tele)-(5'-uridylyl)-L-histidyl-[protein] + diphosphate. The enzyme catalyses L-seryl-[protein] + UTP = O-(5'-uridylyl)-L-seryl-[protein] + diphosphate. It carries out the reaction L-tyrosyl-[protein] + UTP = O-(5'-uridylyl)-L-tyrosyl-[protein] + diphosphate. Its function is as follows. Nucleotidyltransferase involved in the post-translational modification of proteins. It can catalyze the addition of adenosine monophosphate (AMP) or uridine monophosphate (UMP) to a protein, resulting in modifications known as AMPylation and UMPylation. The polypeptide is Protein nucleotidyltransferase YdiU (Rhodopseudomonas palustris (strain BisB18)).